Reading from the N-terminus, the 141-residue chain is Large ribosomal subunit protein uL11 (141 aa).

The protein belongs to the universal ribosomal protein uL11 family. Part of the ribosomal stalk of the 50S ribosomal subunit. Interacts with L10 and the large rRNA to form the base of the stalk. L10 forms an elongated spine to which L12 dimers bind in a sequential fashion forming a multimeric L10(L12)X complex. In terms of processing, one or more lysine residues are methylated.

Its function is as follows. Forms part of the ribosomal stalk which helps the ribosome interact with GTP-bound translation factors. This Crocosphaera subtropica (strain ATCC 51142 / BH68) (Cyanothece sp. (strain ATCC 51142)) protein is Large ribosomal subunit protein uL11.